The sequence spans 179 residues: Alkyl hydroperoxide reductase AhpD (179 aa).

Residue cysteine 130 is the Proton donor of the active site. Cysteine 130 and cysteine 133 form a disulfide bridge. The Cysteine sulfenic acid (-SOH) intermediate role is filled by cysteine 133.

It belongs to the AhpD family. In terms of assembly, homotrimer.

The enzyme catalyses N(6)-[(R)-dihydrolipoyl]-L-lysyl-[lipoyl-carrier protein] + a hydroperoxide = N(6)-[(R)-lipoyl]-L-lysyl-[lipoyl-carrier protein] + an alcohol + H2O. In terms of biological role, antioxidant protein with alkyl hydroperoxidase activity. Required for the reduction of the AhpC active site cysteine residues and for the regeneration of the AhpC enzyme activity. The sequence is that of Alkyl hydroperoxide reductase AhpD from Nocardia farcinica (strain IFM 10152).